A 203-amino-acid polypeptide reads, in one-letter code: Cardiotrophin-2 (203 aa).

The signal sequence occupies residues 1–21 (MSCSLARLCLLTLLSPPLSSA). Residue asparagine 43 is glycosylated (N-linked (GlcNAc...) asparagine).

Belongs to the IL-6 superfamily.

The protein localises to the secreted. Functionally, may have an important role in neuronal precursor development and maturation. The chain is Cardiotrophin-2 (CTF2) from Pan troglodytes (Chimpanzee).